The sequence spans 93 residues: Large ribosomal subunit protein eL29 (93 aa).

Residues 1-31 show a composition bias toward basic residues; that stretch reads MAKSKNHSTHHKNRKDHRNGIKKAVVHKKTS. The segment at 1–33 is disordered; it reads MAKSKNHSTHHKNRKDHRNGIKKAVVHKKTSSK.

This sequence belongs to the eukaryotic ribosomal protein eL29 family.

In Dictyostelium discoideum (Social amoeba), this protein is Large ribosomal subunit protein eL29 (rpl29).